Reading from the N-terminus, the 208-residue chain is Uracil phosphoribosyltransferase (208 aa).

Residues Arg78, Arg103, and 130–138 contribute to the 5-phospho-alpha-D-ribose 1-diphosphate site; that span reads DPMLATGGS. Residues Ile193 and 198-200 each bind uracil; that span reads GDA. Asp199 contacts 5-phospho-alpha-D-ribose 1-diphosphate.

This sequence belongs to the UPRTase family. Mg(2+) serves as cofactor.

It carries out the reaction UMP + diphosphate = 5-phospho-alpha-D-ribose 1-diphosphate + uracil. The protein operates within pyrimidine metabolism; UMP biosynthesis via salvage pathway; UMP from uracil: step 1/1. Allosterically activated by GTP. In terms of biological role, catalyzes the conversion of uracil and 5-phospho-alpha-D-ribose 1-diphosphate (PRPP) to UMP and diphosphate. The polypeptide is Uracil phosphoribosyltransferase (Mannheimia succiniciproducens (strain KCTC 0769BP / MBEL55E)).